The primary structure comprises 29 residues: Cytochrome b6-f complex subunit 8 (29 aa).

The chain crosses the membrane as a helical span at residues 3–23; the sequence is IVSLAWASLMVVFTFSLSLVV.

Belongs to the PetN family. In terms of assembly, the 4 large subunits of the cytochrome b6-f complex are cytochrome b6, subunit IV (17 kDa polypeptide, PetD), cytochrome f and the Rieske protein, while the 4 small subunits are PetG, PetL, PetM and PetN. The complex functions as a dimer.

The protein localises to the plastid. The protein resides in the chloroplast thylakoid membrane. Component of the cytochrome b6-f complex, which mediates electron transfer between photosystem II (PSII) and photosystem I (PSI), cyclic electron flow around PSI, and state transitions. In Coffea arabica (Arabian coffee), this protein is Cytochrome b6-f complex subunit 8.